Here is an 842-residue protein sequence, read N- to C-terminus: Alanine--tRNA ligase (842 aa).

Positions 549, 553, 650, and 654 each coordinate Zn(2+).

It belongs to the class-II aminoacyl-tRNA synthetase family. Zn(2+) serves as cofactor.

The protein resides in the cytoplasm. The enzyme catalyses tRNA(Ala) + L-alanine + ATP = L-alanyl-tRNA(Ala) + AMP + diphosphate. Catalyzes the attachment of alanine to tRNA(Ala) in a two-step reaction: alanine is first activated by ATP to form Ala-AMP and then transferred to the acceptor end of tRNA(Ala). Also edits incorrectly charged Ser-tRNA(Ala) and Gly-tRNA(Ala) via its editing domain. The polypeptide is Alanine--tRNA ligase (Campylobacter jejuni subsp. doylei (strain ATCC BAA-1458 / RM4099 / 269.97)).